We begin with the raw amino-acid sequence, 712 residues long: Autophagy-related protein 13 (712 aa).

Disordered regions lie at residues 388 to 443 (AGST…ETPP) and 568 to 611 (GSVG…DDDE). The segment covering 402–415 (SSVGSGSKYSSSFG) has biased composition (low complexity). The interval 412–420 (SSFGRIRRH) is ATG17-binding. Positions 424–439 (RRSESIDRTAKPRKSN) are enriched in basic and acidic residues. Residues 441 to 500 (TPPEDLLEFVKLLEDKKELNMKPSTILPQQDISSSLIKFQSMKPNNDTLSDNLSMSMSID) form an ATG1-binding region. The segment covering 576 to 585 (TNEDSKEDED) has biased composition (acidic residues).

The protein belongs to the ATG13 family. Fungi subfamily. In terms of assembly, hypophosphorylated form interacts with ATG1 to form the ATG1-ATG13 kinase complex. The ATG1-ATG13 complex interacts with the ATG17-ATG29-ATG31 complex through direct interaction with ATG17. Interacts with VAC8. Post-translationally, hyperphosphorylated under nutrient-rich conditions. Starvation and TOR inactivation results in ATG13 partial dephosphorylation leading to ATG1-binding. Dephosphorylation induces ATG17-binding.

Its subcellular location is the cytoplasm. The protein localises to the preautophagosomal structure. Activates the ATG1 kinase in a nutritional condition dependent manner through the TOR pathway, leading to autophagy. Involved in ATG9 and ATG23 cycling through the pre-autophagosomal structure. Also involved in cytoplasm to vacuole transport (Cvt) and more specifically in Cvt vesicle formation. Seems to play a role in the switching machinery regulating the conversion between the Cvt pathway and autophagy. Finally, ATG13 is also required for glycogen storage during stationary phase. This Kluyveromyces marxianus (strain DMKU3-1042 / BCC 29191 / NBRC 104275) (Yeast) protein is Autophagy-related protein 13.